A 148-amino-acid polypeptide reads, in one-letter code: Large ribosomal subunit protein bL9 (148 aa).

This sequence belongs to the bacterial ribosomal protein bL9 family.

In terms of biological role, binds to the 23S rRNA. The polypeptide is Large ribosomal subunit protein bL9 (Coprothermobacter proteolyticus (strain ATCC 35245 / DSM 5265 / OCM 4 / BT)).